Here is a 99-residue protein sequence, read N- to C-terminus: MIVNALSKAIMAETLCDELKLNKPVAKEMVENFFEELRHALENGQHVKLSGFGNFTLRDKPQRPGRNPKTGEEIPVEARRVVTFKPGLKLKTKIEKIGK.

Residues 52–73 (FGNFTLRDKPQRPGRNPKTGEE) are disordered.

It belongs to the bacterial histone-like protein family. In terms of assembly, heterodimer of an alpha and a beta chain.

Functionally, this protein is one of the two subunits of integration host factor, a specific DNA-binding protein that functions in genetic recombination as well as in transcriptional and translational control. The protein is Integration host factor subunit alpha of Legionella pneumophila subsp. pneumophila (strain Philadelphia 1 / ATCC 33152 / DSM 7513).